The following is a 1009-amino-acid chain: Probable beta-galactosidase B (1009 aa).

The signal sequence occupies residues 1–27 (MKTIAGLSWISALSSLASLPNGLGVSA). Residue Y96 participates in substrate binding. N106 carries an N-linked (GlcNAc...) asparagine glycan. The substrate site is built by N141, A142, E143, and N201. E202 acts as the Proton donor in catalysis. Y271 is a binding site for substrate. An intrachain disulfide couples C277 to C330. E314 serves as the catalytic Nucleophile. Residue Y379 coordinates substrate. N467, N495, N547, N593, N632, N672, N707, N775, N782, N789, N795, and N914 each carry an N-linked (GlcNAc...) asparagine glycan.

This sequence belongs to the glycosyl hydrolase 35 family.

The protein localises to the secreted. The enzyme catalyses Hydrolysis of terminal non-reducing beta-D-galactose residues in beta-D-galactosides.. Functionally, cleaves beta-linked terminal galactosyl residues from gangliosides, glycoproteins, and glycosaminoglycans. This Pyrenophora tritici-repentis (strain Pt-1C-BFP) (Wheat tan spot fungus) protein is Probable beta-galactosidase B (lacB).